The primary structure comprises 700 residues: Cap-specific mRNA (nucleoside-2'-O-)-methyltransferase 2 (700 aa).

The interval 1–21 is disordered; it reads MSFRSSPQGKPHPMTDYQSIR. An Adrift-type SAM-dependent 2'-O-MTase domain is found at 109–321; the sequence is EFVTVAWCKL…VYVICLNYNK (213 aa). The active site involves Lys-117. Residues Gly-143, Trp-164, and Asp-234 each contribute to the S-adenosyl-L-methionine site. Asp-234 is a catalytic residue. The active-site Proton acceptor is Lys-274.

Its subcellular location is the nucleus. It catalyses the reaction a 5'-end (N(7)-methyl 5'-triphosphoguanosine)-(2'-O-methyl-ribonucleoside)-(ribonucleotide) in mRNA + S-adenosyl-L-methionine = a 5'-end (N(7)-methyl 5'-triphosphoguanosine)-(2'-O-methyl-ribonucleoside)-(2'-O-methyl-ribonucleotide) in mRNA + S-adenosyl-L-homocysteine + H(+). Probable S-adenosyl-L-methionine-dependent methyltransferase that mediates mRNA cap2 2'-O-ribose methylation to the 5'-cap structure of mRNAs. May methylate the ribose of the second nucleotide of a m(7)GpppG-capped mRNA (cap0) to produce m(7)GpppRmpNm (cap2). Regulates expression of tracheal genes required for pathfinding on the segmental nerve. This Drosophila melanogaster (Fruit fly) protein is Cap-specific mRNA (nucleoside-2'-O-)-methyltransferase 2 (cmtr2).